Here is a 285-residue protein sequence, read N- to C-terminus: Complex I assembly factor TIMMDC1, mitochondrial (285 aa).

The next 4 helical transmembrane spans lie at 80–100, 137–159, 165–185, and 188–208; these read AAVS…FIYA, RWSW…LTVY, MSHF…NLGV, and LVAG…LLMA. The interval 265 to 285 is disordered; it reads RIEELLSLPRNPSSPHQQSKH. Positions 274–285 are enriched in polar residues; sequence RNPSSPHQQSKH. S277 bears the Phosphoserine mark.

Belongs to the Tim17/Tim22/Tim23 family. As to quaternary structure, associates with the intermediate 315 kDa subcomplex of incompletely assembled complex I. Interacts with TMEM70.

It is found in the mitochondrion membrane. In terms of biological role, chaperone protein involved in the assembly of the mitochondrial NADH:ubiquinone oxidoreductase complex (complex I). Participates in constructing the membrane arm of complex I. This chain is Complex I assembly factor TIMMDC1, mitochondrial, found in Mus musculus (Mouse).